Reading from the N-terminus, the 359-residue chain is E3 ubiquitin-protein ligase RNF146 (359 aa).

Residues Cys-36–Arg-74 form an RING-type zinc finger. Glycyl lysine isopeptide (Lys-Gly) (interchain with G-Cter in ubiquitin) cross-links involve residues Lys-84 and Lys-94. The 77-residue stretch at Glu-91–Arg-167 folds into the WWE domain. The a glycoprotein site is built by Tyr-107, Arg-110, and Trp-114. Residue Lys-130 forms a Glycyl lysine isopeptide (Lys-Gly) (interchain with G-Cter in ubiquitin) linkage. A glycoprotein contacts are provided by Tyr-144, Gln-153, Arg-163, and Lys-175. Lys-175 is covalently cross-linked (Glycyl lysine isopeptide (Lys-Gly) (interchain with G-Cter in ubiquitin)). Positions Glu-259 to Val-359 are disordered. The segment covering Ser-284–Asp-298 has biased composition (acidic residues). Ser-290 and Ser-294 each carry phosphoserine. A compositionally biased stretch (polar residues) spans His-306–Val-322.

As to quaternary structure, can form homooligomers. Interacts with PARsylated AXIN1, AXIN2, BLZF1, CASC3, H1-2, IPO7, LIG3, NCL, PARP1, XRCC1, XRCC5 and XRCC6. Interacts with DDB1, DHX15, IQGAP1, LRPPRC, PARP2, PRKDC, RUVBL2, TNKS1 and TNKS2. Binding often leads to interactor ubiquitination, in the presence of the appropriate E1 and E2 enzymes, and proteasomal degradation. In terms of processing, ubiquitinated; autoubiquitinated. Autoubiquitination is enhanced upon poly(ADP-ribose)-binding.

The protein resides in the cytoplasm. Its subcellular location is the cytosol. The protein localises to the nucleus. The enzyme catalyses S-ubiquitinyl-[E2 ubiquitin-conjugating enzyme]-L-cysteine + [acceptor protein]-L-lysine = [E2 ubiquitin-conjugating enzyme]-L-cysteine + N(6)-ubiquitinyl-[acceptor protein]-L-lysine.. The protein operates within protein modification; protein ubiquitination. Its function is as follows. E3 ubiquitin-protein ligase that specifically binds poly-ADP-ribosylated (PARsylated) proteins and mediates their ubiquitination and subsequent degradation. May regulate many important biological processes, such as cell survival and DNA damage response. Acts as an activator of the Wnt signaling pathway by mediating the ubiquitination of PARsylated AXIN1 and AXIN2, 2 key components of the beta-catenin destruction complex. Acts in cooperation with tankyrase proteins (TNKS and TNKS2), which mediate PARsylation of target proteins AXIN1, AXIN2, BLZF1, CASC3, TNKS and TNKS2. Recognizes and binds tankyrase-dependent PARsylated proteins via its WWE domain and mediates their ubiquitination, leading to their degradation. Different ubiquitin linkage types have been observed: TNKS2 undergoes ubiquitination at 'Lys-48' and 'Lys-63', while AXIN1 is only ubiquitinated at 'Lys-48'. May regulate TNKS and TNKS2 subcellular location, preventing aggregation at a centrosomal location. Neuroprotective protein. Protects the brain against N-methyl-D-aspartate (NMDA) receptor-mediated glutamate excitotoxicity and ischemia, by interfering with PAR-induced cell death, called parthanatos. Prevents nuclear translocation of AIFM1 in a PAR-binding dependent manner. Does not affect PARP1 activation. Protects against cell death induced by DNA damaging agents, such as N-methyl-N-nitro-N-nitrosoguanidine (MNNG) and rescues cells from G1 arrest. Promotes cell survival after gamma-irradiation. Facilitates DNA repair. In Ailuropoda melanoleuca (Giant panda), this protein is E3 ubiquitin-protein ligase RNF146 (RNF146).